The following is a 434-amino-acid chain: Gamma-enolase (434 aa).

The substrate site is built by histidine 158 and glutamate 167. Glutamate 210 serves as the catalytic Proton donor. Residues aspartate 245, glutamate 293, and aspartate 318 each coordinate Mg(2+). Positions 293 and 318 each coordinate substrate. The active-site Proton acceptor is lysine 343. Residues 370–373 (SHRS) and lysine 394 contribute to the substrate site.

Belongs to the enolase family. As to quaternary structure, homodimer. Mg(2+) serves as cofactor. Expressed in the brain and, to much less but significant extents, in the pituitary and adrenal glands.

It is found in the cytoplasm. It catalyses the reaction (2R)-2-phosphoglycerate = phosphoenolpyruvate + H2O. Its pathway is carbohydrate degradation; glycolysis; pyruvate from D-glyceraldehyde 3-phosphate: step 4/5. This is Gamma-enolase (ENO2) from Gallus gallus (Chicken).